Consider the following 159-residue polypeptide: Aspartate carbamoyltransferase regulatory chain (159 aa).

Zn(2+) contacts are provided by cysteine 113, cysteine 118, cysteine 142, and cysteine 145.

It belongs to the PyrI family. In terms of assembly, contains catalytic and regulatory chains. Zn(2+) serves as cofactor.

Its function is as follows. Involved in allosteric regulation of aspartate carbamoyltransferase. In Saccharolobus islandicus (strain Y.N.15.51 / Yellowstone #2) (Sulfolobus islandicus), this protein is Aspartate carbamoyltransferase regulatory chain.